The chain runs to 123 residues: MVRTKADCAGSSSGSYRKAVAARAPRKTFGSSSSGSNHDTSPTGKKSECKYAGGNPVCVRPIPTWQKGIGDFFGSPSTSQPEKENRIPSDDEEAGGSGAGKKPRKSRPLPPDPSEEAADSGDE.

The tract at residues 1–123 (MVRTKADCAG…SEEAADSGDE (123 aa)) is disordered. The D-box motif lies at 26–37 (RKTFGSSSSGSN). Positions 66–77 (QKGIGDFFGSPS) match the PIP-box motif. Positions 83 to 85 (KEN) match the KEN box motif. The Initiation motif signature appears at 93–105 (EAGGSGAGKKPRK). Residues 113-123 (PSEEAADSGDE) show a composition bias toward acidic residues.

As to quaternary structure, interacts with pcna.

It localises to the nucleus. The protein resides in the cytoplasm. It is found in the perinuclear region. In terms of biological role, PCNA-binding protein that acts as a regulator of DNA repair during DNA replication. Following DNA damage, the interaction with pcna is disrupted, facilitating the interaction between monoubiquitinated pcna and the translesion DNA synthesis DNA polymerase eta (polh) at stalled replisomes, facilitating the bypass of replication-fork-blocking lesions. Also acts as a regulator of centrosome number. The polypeptide is PCNA-associated factor (Xenopus laevis (African clawed frog)).